Reading from the N-terminus, the 287-residue chain is 26S proteasome non-ATPase regulatory subunit 8 (287 aa).

S43 bears the Phosphoserine mark. In terms of domain architecture, PCI spans 99–268 (PSFERYMAQL…QQKPEDTTIP (170 aa)). Residue K234 forms a Glycyl lysine isopeptide (Lys-Gly) (interchain with G-Cter in SUMO2) linkage.

This sequence belongs to the proteasome subunit S14 family. As to quaternary structure, component of the 19S proteasome regulatory particle complex. The 26S proteasome consists of a 20S core particle (CP) and two 19S regulatory subunits (RP). The regulatory particle is made of a lid composed of 9 subunits including PSMD8, a base containing 6 ATPases and few additional components. Interacts with DDI2. Interacts with TASOR.

Functionally, component of the 26S proteasome, a multiprotein complex involved in the ATP-dependent degradation of ubiquitinated proteins. This complex plays a key role in the maintenance of protein homeostasis by removing misfolded or damaged proteins, which could impair cellular functions, and by removing proteins whose functions are no longer required. Therefore, the proteasome participates in numerous cellular processes, including cell cycle progression, apoptosis, or DNA damage repair. The sequence is that of 26S proteasome non-ATPase regulatory subunit 8 (PSMD8) from Bos taurus (Bovine).